The primary structure comprises 100 residues: Vesicle-associated membrane protein 3 (100 aa).

The residue at position 2 (Ser-2) is an N-acetylserine. Over 2–77 (STGPTAATGS…KRKYWWKNCK (76 aa)) the chain is Cytoplasmic. The v-SNARE coiled-coil homology domain maps to 14–74 (RLQQTQNQVD…AKLKRKYWWK (61 aa)). Residues Lys-66, Lys-68, and Lys-77 each participate in a glycyl lysine isopeptide (Lys-Gly) (interchain with G-Cter in ubiquitin) cross-link. Residues 78-98 (MWAIGITVLVIFIIIIIVWVV) form a helical; Anchor for type IV membrane protein membrane-spanning segment. At 99–100 (SS) the chain is on the vesicular side.

The protein belongs to the synaptobrevin family. In terms of assembly, interacts with POPDC1 (via the C-terminus cytoplasmic tail). Interacts with BCAP31; involved in VAMP3 export from the endoplasmic reticulum. Interacts with BAIAP3; this interaction is increased in the presence of calcium. Interacts with PICALM. Post-translationally, ubiquitinated by RNF167 at Lys-66, Lys-68 and Lys-77, regulating the recycling endosome pathway. (Microbial infection) Targeted and hydrolyzed by C.botulinum neurotoxin type B (BoNT/B, botB) which hydrolyzes the 59-Gln-|-Phe-60 bond and probably inhibits neurotransmitter release. In terms of processing, (Microbial infection) Targeted and hydrolyzed by C.botulinum neurotoxin type D (BoNT/D, botD) which hydrolyzes the 42-Lys-|-Leu-43 bond and probably inhibits neurotransmitter release. Note that humans are not known to be infected by C.botulinum type D. Post-translationally, (Microbial infection) Targeted and hydrolyzed by C.botulinum neurotoxin type F (BoNT/F, botF) which hydrolyzes the 41-Gln-|-Lys-42 bond and probably inhibits neurotransmitter release.

It localises to the early endosome membrane. The protein localises to the recycling endosome membrane. It is found in the synapse. Its subcellular location is the synaptosome. SNARE involved in vesicular transport from the late endosomes to the trans-Golgi network. The sequence is that of Vesicle-associated membrane protein 3 (VAMP3) from Homo sapiens (Human).